Reading from the N-terminus, the 472-residue chain is Adenosylhomocysteinase (472 aa).

Substrate-binding residues include Thr-64, Asp-138, and Glu-198. An NAD(+)-binding site is contributed by 199 to 201; it reads TTT. Residues Lys-228 and Asp-232 each contribute to the substrate site. NAD(+)-binding positions include Asn-233, 262-267, Glu-285, Asn-320, 341-343, and Asn-386; these read GFGDVG and IGH.

The protein belongs to the adenosylhomocysteinase family. NAD(+) serves as cofactor.

It localises to the cytoplasm. It carries out the reaction S-adenosyl-L-homocysteine + H2O = L-homocysteine + adenosine. Its pathway is amino-acid biosynthesis; L-homocysteine biosynthesis; L-homocysteine from S-adenosyl-L-homocysteine: step 1/1. Its function is as follows. May play a key role in the regulation of the intracellular concentration of adenosylhomocysteine. This chain is Adenosylhomocysteinase, found in Prochlorococcus marinus (strain MIT 9312).